The following is a 201-amino-acid chain: Regulator of G-protein signaling 1 (201 aa).

Residues 75 to 191 (SLEKLLISED…LKSEIFLRLA (117 aa)) form the RGS domain.

It is found in the cell membrane. The protein localises to the cytoplasm. It localises to the cytosol. Regulates G protein-coupled receptor signaling cascades, including signaling downstream of the N-formylpeptide chemoattractant receptors and leukotriene receptors. Inhibits B cell chemotaxis. Inhibits signal transduction by increasing the GTPase activity of G protein alpha subunits, thereby driving them into their inactive GDP-bound form. The chain is Regulator of G-protein signaling 1 (rgs1) from Xenopus tropicalis (Western clawed frog).